A 508-amino-acid chain; its full sequence is Hydroxymethylglutaryl-CoA synthase, mitochondrial (508 aa).

The N-terminal 37 residues, 1 to 37, are a transit peptide targeting the mitochondrion; that stretch reads MQRLLAPARRVLQVKRVMQESSLSPAHLLPAAQQRFS. Lys-52 is modified (N6-succinyllysine). (3S)-3-hydroxy-3-methylglutaryl-CoA-binding residues include Glu-80 and Ala-81. Lys-83 and Lys-118 each carry N6-acetyllysine; alternate. Lys-83 and Lys-118 each carry N6-succinyllysine; alternate. Glu-132 acts as the Proton donor/acceptor in catalysis. (3S)-3-hydroxy-3-methylglutaryl-CoA contacts are provided by Cys-166, Asn-204, and Thr-208. The active-site Acyl-thioester intermediate is the Cys-166. Residue Lys-221 is modified to N6-succinyllysine. An N6-acetyllysine modification is found at Lys-243. Lys-256 is subject to N6-acetyllysine; alternate. Lys-256 carries the post-translational modification N6-succinyllysine; alternate. 2 residues coordinate (3S)-3-hydroxy-3-methylglutaryl-CoA: Ser-258 and His-301. The Proton donor/acceptor role is filled by His-301. Lys-306 carries the post-translational modification N6-acetyllysine. Residue Lys-310 coordinates (3S)-3-hydroxy-3-methylglutaryl-CoA. 2 positions are modified to N6-acetyllysine; alternate: Lys-310 and Lys-327. Lys-310 and Lys-327 each carry N6-succinyllysine; alternate. Lys-333 bears the N6-succinyllysine mark. An N6-acetyllysine; alternate mark is found at Lys-342, Lys-350, Lys-354, and Lys-358. An N6-succinyllysine; alternate mark is found at Lys-342, Lys-350, Lys-354, and Lys-358. Positions 380 and 414 each coordinate (3S)-3-hydroxy-3-methylglutaryl-CoA. The residue at position 427 (Lys-427) is an N6-acetyllysine. Ser-433 carries the post-translational modification Phosphoserine. Lys-437 carries the N6-acetyllysine modification. The residue at position 440 (Ser-440) is a Phosphoserine. Lys-447 carries the N6-acetyllysine; alternate modification. Lys-447 bears the N6-succinyllysine; alternate mark. Ser-456 carries the post-translational modification Phosphoserine. Residue Lys-473 is modified to N6-acetyllysine; alternate. An N6-succinyllysine; alternate modification is found at Lys-473. A Phosphoserine modification is found at Ser-477.

This sequence belongs to the thiolase-like superfamily. HMG-CoA synthase family. As to quaternary structure, homodimer. Post-translationally, succinylated. Desuccinylated by SIRT5. Succinylation, at least at Lys-83 and Lys-310, inhibits the enzymatic activity. In terms of tissue distribution, liver and kidney.

The protein localises to the mitochondrion. The enzyme catalyses acetoacetyl-CoA + acetyl-CoA + H2O = (3S)-3-hydroxy-3-methylglutaryl-CoA + CoA + H(+). It functions in the pathway metabolic intermediate biosynthesis; (R)-mevalonate biosynthesis; (R)-mevalonate from acetyl-CoA: step 2/3. Its function is as follows. Catalyzes the first irreversible step in ketogenesis, condensing acetyl-CoA to acetoacetyl-CoA to form HMG-CoA, which is converted by HMG-CoA reductase (HMGCR) into mevalonate. This chain is Hydroxymethylglutaryl-CoA synthase, mitochondrial (Hmgcs2), found in Rattus norvegicus (Rat).